The following is a 413-amino-acid chain: D-nopaline dehydrogenase (413 aa).

It belongs to the lysopine/nopaline/octopine/opine/vitopine dehydrogenases family. In terms of assembly, homotetramer.

It carries out the reaction D-nopaline + NADP(+) + H2O = L-arginine + 2-oxoglutarate + NADPH + H(+). This is D-nopaline dehydrogenase (nos) from Agrobacterium tumefaciens (strain T37).